The chain runs to 106 residues: Small ribosomal subunit protein uS10 (106 aa).

The protein belongs to the universal ribosomal protein uS10 family. Part of the 30S ribosomal subunit.

Its function is as follows. Involved in the binding of tRNA to the ribosomes. The sequence is that of Small ribosomal subunit protein uS10 from Synechococcus sp. (strain CC9605).